Reading from the N-terminus, the 135-residue chain is MQKTLALVAHDHKKPELIRWSLEHKAELEKHNLVATGTTGGLLQEALNLPVTRYKSGPLGGDQQIGALIAEGKLDALIFFWDPLNPAPHDPDVKALLRLCSVWNLPVACNTSTADMLITSPLFIEGLYERAVPEF.

The 135-residue stretch at 1 to 135 (MQKTLALVAH…GLYERAVPEF (135 aa)) folds into the MGS-like domain. Substrate-binding positions include His10, Lys14, 36–39 (TGTT), and 56–57 (SG). Asp62 acts as the Proton donor/acceptor in catalysis. Residue His89 participates in substrate binding.

Belongs to the methylglyoxal synthase family.

The catalysed reaction is dihydroxyacetone phosphate = methylglyoxal + phosphate. Functionally, catalyzes the formation of methylglyoxal from dihydroxyacetone phosphate. This chain is Methylglyoxal synthase, found in Pseudoalteromonas atlantica (strain T6c / ATCC BAA-1087).